A 122-amino-acid polypeptide reads, in one-letter code: uncharacterized protein (122 aa).

2 disordered regions span residues 1 to 30 and 96 to 122; these read MGREMKKTGTPRPFRIEDPNQQPTWHDQPE and FKSCLPPHFTEPSVSLSTSEGCEDAMG.

This is an uncharacterized protein from Homo sapiens (Human).